The chain runs to 469 residues: Glutamine synthetase (469 aa).

Positions 14–99 constitute a GS beta-grasp domain; that stretch reads NDVKFVDLRF…FCDILDPVSG (86 aa). Positions 106 to 469 constitute a GS catalytic domain; that stretch reads PRGTAKKAEA…PVEFDMYYSV (364 aa). 2 residues coordinate Mg(2+): Glu-131 and Glu-133. Position 209 (Glu-209) interacts with ATP. Mg(2+) is bound by residues Glu-214 and Glu-221. Residues 265–266 and Gly-266 contribute to the L-glutamate site; that span reads NG. His-270 provides a ligand contact to Mg(2+). ATP is bound by residues 272–274 and Ser-274; that span reads HLS. Arg-322, Glu-328, and Arg-340 together coordinate L-glutamate. The ATP site is built by Arg-340, Arg-345, and Lys-353. Glu-358 provides a ligand contact to Mg(2+). Arg-360 is a binding site for L-glutamate. Residue Tyr-398 is modified to O-AMP-tyrosine.

The protein belongs to the glutamine synthetase family. In terms of assembly, oligomer of 12 subunits arranged in the form of two hexameric ring. Mg(2+) is required as a cofactor.

Its subcellular location is the cytoplasm. The catalysed reaction is L-glutamate + NH4(+) + ATP = L-glutamine + ADP + phosphate + H(+). The activity of this enzyme could be controlled by adenylation under conditions of abundant glutamine. Catalyzes the ATP-dependent biosynthesis of glutamine from glutamate and ammonia. In Rhizobium meliloti (strain 1021) (Ensifer meliloti), this protein is Glutamine synthetase.